Reading from the N-terminus, the 231-residue chain is Lipid A acyltransferase PagP (231 aa).

A signal peptide spans 1-23; that stretch reads MNKLTVRNFIVGLLIVFSLNSFS. A compositionally biased stretch (low complexity) spans 24–43; the sequence is SPPSISNSSSNSIDENSPIN. Positions 24 to 59 are disordered; that stretch reads SPPSISNSSSNSIDENSPINTFKISPDNQTSKKSDL. Catalysis depends on residues histidine 100, aspartate 145, and serine 146.

The protein belongs to the lipid A palmitoyltransferase family. In terms of assembly, homodimer.

It is found in the cell outer membrane. It carries out the reaction a lipid A + a 1,2-diacyl-sn-glycero-3-phosphocholine = a hepta-acyl lipid A + a 2-acyl-sn-glycero-3-phosphocholine. The catalysed reaction is a lipid IVA + a 1,2-diacyl-sn-glycero-3-phosphocholine = a lipid IVB + a 2-acyl-sn-glycero-3-phosphocholine. It catalyses the reaction a lipid IIA + a 1,2-diacyl-sn-glycero-3-phosphocholine = a lipid IIB + a 2-acyl-sn-glycero-3-phosphocholine. Functionally, transfers a fatty acid residue from the sn-1 position of a phospholipid to the N-linked hydroxyfatty acid chain on the proximal unit of lipid A or its precursors. This Legionella longbeachae serogroup 1 (strain NSW150) protein is Lipid A acyltransferase PagP.